The sequence spans 122 residues: Large ribosomal subunit protein uL14 (122 aa).

The protein belongs to the universal ribosomal protein uL14 family. As to quaternary structure, part of the 50S ribosomal subunit. Forms a cluster with proteins L3 and L19. In the 70S ribosome, L14 and L19 interact and together make contacts with the 16S rRNA in bridges B5 and B8.

Binds to 23S rRNA. Forms part of two intersubunit bridges in the 70S ribosome. The chain is Large ribosomal subunit protein uL14 from Delftia acidovorans (strain DSM 14801 / SPH-1).